Reading from the N-terminus, the 304-residue chain is Sulfotransferase 1C3 (304 aa).

56-61 (KSGTTW) provides a ligand contact to 3'-phosphoadenylyl sulfate. 115–117 (KTH) serves as a coordination point for substrate. Catalysis depends on histidine 117, which acts as the Proton acceptor. Residues arginine 139, serine 147, tyrosine 202, 236–241 (TSFDVM), and 264–268 (FMRKG) contribute to the 3'-phosphoadenylyl sulfate site.

It belongs to the sulfotransferase 1 family. Not detectable in any of the tissues tested. In terms of tissue distribution, expressed in the small intestine.

The protein resides in the cytoplasm. The enzyme catalyses an alcohol + 3'-phosphoadenylyl sulfate = an alkyl sulfate + adenosine 3',5'-bisphosphate + H(+). The catalysed reaction is a phenol + 3'-phosphoadenylyl sulfate = an aryl sulfate + adenosine 3',5'-bisphosphate + H(+). It carries out the reaction lithocholate + 3'-phosphoadenylyl sulfate = lithocholate sulfate + adenosine 3',5'-bisphosphate + H(+). Functionally, sulfotransferase that utilizes 3'-phospho-5'-adenylyl sulfate (PAPS) as sulfonate donor. Has sulfotransferase activity towards various substrates, such as bile acids, thyroid hormones and toward xenobiotic compounds such as chloro phenols and hydroxypyrenes. Lithocholic acid appears to be the best substrate among the endogenous compounds tested and 3,3',5,5'-tetrachloro-4,4'-biphenyldiol shows the highest specific activity among the xenobiotic compounds. Its function is as follows. Exhibits weak sulphating activity and only toward chloro phenols (pentachlorophenol and 3,3',5,5'-tetrachloro-4,4'-biphenyldiol). This is Sulfotransferase 1C3 (SULT1C3) from Homo sapiens (Human).